An 803-amino-acid chain; its full sequence is MNLSEIWLREYLSINLDLNEIINRITKIGLEVEKIIPVSMKFSGIKIGKVISCKQHPKCKKLKIFLIKINNKNIINVISDYDKSLINKKIAVAVNGSILPNRTIVEKKFLYGYESCGIFCTYDQLKIFGLKETSKDIIVLDKNAIIGEDIKNYFFLNDNIICIKVSHNRCDCLNIIGLSRAISSEYNELLENKLINKINSTKDYGFKIKINEPEACPKYLTRKIKYINLNVNTPIWISERIRRSGFKPKNIIIDIINYVFIETGQTIKIFDADKISGNITVRFSKEKESMMISKNKKIIIQKNTLVVSDKNSIIEIAGILLGYSARIDSKTTINIIISSVLYRSKFLFGNSVKYCINSDLAYRNERNMIDPNIQHLAINRATELILRFCCGSPGKIINYINNKFLPKKILIKLYKKKLYEILGFFISKKLIENILLLLGYKYEFIKNYWKVSVPSWRMCNVKIEEDLISDISRFYGFEKIPIDLSYKKIKYNNCKYNINTLNNAKKLLTNRGYQEIISYTFVDKNIQNIIHPNKIPVPIINPISTEMSVLRLSFFTNFIQTILYNQNRQTKYIKIFESGFCFSKNKKYKLGIKQSFFISGAVSGFKNVESWYSKQREIDFFDIKGDVETLLYLNGNSSDFEFKTCKNKEFHPGKNSKIFFKKKYVGIIGEINPNIQNKLDIKNRIFVFELLWDNIKNFYVPKIYNISDIPFNYRDISIVISNKIPIIEVIKICKDSIKKELININIFDIYQGKEIKKGHKSISIRLTLQNKNYNMTNLEINSILEKCICNLKKNFLIEIRTIC.

Residues 39–151 form the tRNA-binding domain; that stretch reads SMKFSGIKIG…KNAIIGEDIK (113 aa). Positions 406–482 constitute a B5 domain; it reads PKKILIKLYK…RFYGFEKIPI (77 aa). Asp466 and Asp470 together coordinate Mg(2+). Residues 707-800 enclose the FDX-ACB domain; it reads SDIPFNYRDI…LKKNFLIEIR (94 aa).

Belongs to the phenylalanyl-tRNA synthetase beta subunit family. Type 1 subfamily. As to quaternary structure, tetramer of two alpha and two beta subunits. The cofactor is Mg(2+).

It is found in the cytoplasm. It catalyses the reaction tRNA(Phe) + L-phenylalanine + ATP = L-phenylalanyl-tRNA(Phe) + AMP + diphosphate + H(+). The chain is Phenylalanine--tRNA ligase beta subunit from Wigglesworthia glossinidia brevipalpis.